Consider the following 1248-residue polypeptide: von Willebrand factor A domain-containing protein 5B2 (1248 aa).

The VIT domain maps to 1-138; it reads MPGLYCPTSW…TMTVTLCSSR (138 aa). The tract at residues 184-204 is disordered; sequence VGSPEEERPTWEQPTATPDVF. Residues 354-527 enclose the VWFA domain; that stretch reads ELLFLLDGSG…KALEPALSDI (174 aa). 5 disordered regions span residues 590–650, 672–710, 751–789, 1008–1037, and 1126–1168; these read PEEV…SSDT, SASPEPGPGSTCSSESPGSQGPGSPSGSRPLDPPSQQGC, ALAGRSLSSPSGRANPVPGRARHPSLDAIPDGLGPEPGQ, SKSALGEPISPTGDHHGLPHQPPASSRLSL, and DSAT…SSDL. A compositionally biased stretch (polar residues) spans 595-619; the sequence is SATSPGTEPTHTTEPLGTGTVSAEL. Composition is skewed to low complexity over residues 684 to 701, 751 to 764, and 780 to 789; these read SSESPGSQGPGSPSGSRP, ALAGRSLSSPSGRA, and PDGLGPEPGQ. Residues 1127–1145 are compositionally biased toward low complexity; sequence SATASCSQSPSSGSEGPGQ. The span at 1159 to 1168 shows a compositional bias: basic and acidic residues; sequence GMERQDSSDL.

This is von Willebrand factor A domain-containing protein 5B2 (Vwa5b2) from Mus musculus (Mouse).